Here is a 1263-residue protein sequence, read N- to C-terminus: MDVPSSSNVTGRRKRQVLDDDEDDGFRSTPLRKVRGTKKIRPADVVPETIMTKIGAHIDDIVNKKKVGELNCFEYKSPLEIHTIEDMIKAKASIQEMAVVLEGAQCIIGYRVDRLHHDVRQIDSALSSGTVMRDSNGEEIHLTLESRKAKKKMAVVDGMNGMLDFLNNMDDALTTTELDADNDKNWKEDEENIAGEPRIDFKANSKDVDAFLQRDIFPEKLIYALSIKRATDLRADLLSDVSNYISADDTAHDLKDANIDWLRANPTFQKATKGSVCNSSNSFHSLNYYGIHSPDGRTLMLHNRIADKNADDRFFTSDVSVSLVKNTRALLTNSLDKKPRILDNYLMLEVKDRPVIGRYKIMSKDVKKSTLPLAESSREKDLANLTFAEMNHRPSNLDMTVAGASDMSMLPGNQGLPLAQGENDETIALDRLTPPLQSSVSQKASDEYVLPPLEANDLDEHLIGKLPIEPNEMDQTLANMFDKKLEVFNTSDTLESKVWKNGIRAEEWGEDDEAIMKNDTKHPRQAGIEGWIKATDAWTNYDVVKMNVNREARSQLDENAIDEQESYRNMVPEIGKNLFLVKSDDYMNNYPGDRPADFTVNDEVSDVMKMWSGEDSTAEDDVPLEQIQQEIREQVQQQDVDMEPIEEMDYDAGGAAFDVDFDDRLAAPVEVEEMEGDNNRNDGRVADILFNEQMDETEVEERNEQDVQRELEDIALAADEVAELMTSAPPPQLVGPSAEMREEIQNIGKNDNAHWVPPVVGDQERQAAVTAQRKRREKKAKSRKATVEDFVHYFRDIPDDEIEREITAAKCSKIADEKSTFLSEQQLYLPTLGIENKPHVAFEMGLLGNSGMFFKKSYGKIRLERVKNQKAEQDLFIDEARGNKDSDCLNWLLSFSGFRCMENPEPITGSDSDENLRTAVEQPFDDDFANDYYDEDRYDPNYEQQLAAAQMGPDMQRKLALTASHINQMFPNIHSKRYGGEYGDSDDEFDDSFDRQSIQAKNLDAAKHKKCLAEILKTDSLSMPSIQYVLEQLTSNQTLRMNNTTIRAADDRNETGRPATPTMEADKTLTSVFDYRSPNKSNHDVNETMKALTEMPDYQAADERPNNQPTTSTYGTANTENRKVHINGCHTLLSLALSMPSRMGETVRPSSIVSFLLHIANENNLQIVQDRSKRSWMSDFIVLNSSESLPRGLKMGRIEDQDEFWKRTQDPDAIEGTASDANNVFSNLMRRPKAVPVRKGRGAGGQPTTSDLGAIVEEEEMEE.

Positions 1–10 (MDVPSSSNVT) are enriched in polar residues. The disordered stretch occupies residues 1-29 (MDVPSSSNVTGRRKRQVLDDDEDDGFRST). Positions 691 to 725 (NEQMDETEVEERNEQDVQRELEDIALAADEVAELM) form a coiled coil. Disordered regions lie at residues 1098–1118 (YQAADERPNNQPTTSTYGTAN) and 1225–1263 (FSNLMRRPKAVPVRKGRGAGGQPTTSDLGAIVEEEEMEE). Positions 1106–1118 (NNQPTTSTYGTAN) are enriched in polar residues. Residues 1230 to 1241 (RRPKAVPVRKGR) are compositionally biased toward basic residues.

In terms of assembly, component of the condensin I complex, which contains the mix-1/SMC2 and smc-4/SMC4 heterodimer, and three non SMC subunits that probably regulate the complex: dpy-26, capg-1 and dpy-28. Within the complex, interacts with dpy-28, mix-1, smc-4 and capg-1. Component of the dosage compensation complex, which consists of the condensin I-like components mix-1/SMC2 and dpy-27/SMC4, and the three non SMC subunits dpy-26, capg-1 and dpy-28. Within the complex, interacts with dpy-27, dpy-28, mix-1 and capg-1. The interaction with dpy-27 is required for dpy-27 protein stability. Interacts with smcl-1. As to expression, expressed in embryos and in somatic and germline tissues in L4 stage larvae (at protein level).

It is found in the nucleus. The protein localises to the chromosome. Functionally, required for both chromosome condensation and segregation and for X-chromosome dosage compensation depending on its binding partners. Member of the condensin I complex, a complex required for conversion of interphase chromatin into mitotic-like condense chromosomes and for proper chromosome segregation in mitosis and meiosis. As a member of the condensin I complex, further controls the crossover number and distribution in meiosis by restricting double strand break formation, probably by influencing higher-order chromosome structure. Plays a role in robust cytokinesis upon presence of chromatin obstructions. Also a member of the condensin I-like dosage compensation complex that associates specifically with hermaphrodite X chromosomes to reduce their gene transcription during interphase, possibly through chromatin reorganization. As a member of the dosage compensation complex, also binds to regulatory regions of the autosomal her-1 gene, required for male development, possibly contributing to its repression in hermaphrodites. The chain is Condensin complex subunit dpy-26 from Caenorhabditis elegans.